Consider the following 253-residue polypeptide: ATP synthase subunit b 2 (253 aa).

The chain crosses the membrane as a helical span at residues 9–27 (VLEIVNFLVLVWLLKRFLY).

The protein belongs to the ATPase B chain family. As to quaternary structure, F-type ATPases have 2 components, F(1) - the catalytic core - and F(0) - the membrane proton channel. F(1) has five subunits: alpha(3), beta(3), gamma(1), delta(1), epsilon(1). F(0) has three main subunits: a(1), b(2) and c(10-14). The alpha and beta chains form an alternating ring which encloses part of the gamma chain. F(1) is attached to F(0) by a central stalk formed by the gamma and epsilon chains, while a peripheral stalk is formed by the delta and b chains.

Its subcellular location is the cell inner membrane. Its function is as follows. F(1)F(0) ATP synthase produces ATP from ADP in the presence of a proton or sodium gradient. F-type ATPases consist of two structural domains, F(1) containing the extramembraneous catalytic core and F(0) containing the membrane proton channel, linked together by a central stalk and a peripheral stalk. During catalysis, ATP synthesis in the catalytic domain of F(1) is coupled via a rotary mechanism of the central stalk subunits to proton translocation. Component of the F(0) channel, it forms part of the peripheral stalk, linking F(1) to F(0). This chain is ATP synthase subunit b 2, found in Methylococcus capsulatus (strain ATCC 33009 / NCIMB 11132 / Bath).